Here is a 185-residue protein sequence, read N- to C-terminus: ATP-dependent protease subunit HslV (185 aa).

The active site involves threonine 14. Na(+) contacts are provided by alanine 168, cysteine 171, and threonine 174.

The protein belongs to the peptidase T1B family. HslV subfamily. As to quaternary structure, a double ring-shaped homohexamer of HslV is capped on each side by a ring-shaped HslU homohexamer. The assembly of the HslU/HslV complex is dependent on binding of ATP.

It localises to the cytoplasm. It catalyses the reaction ATP-dependent cleavage of peptide bonds with broad specificity.. With respect to regulation, allosterically activated by HslU binding. Functionally, protease subunit of a proteasome-like degradation complex believed to be a general protein degrading machinery. In Hyphomonas neptunium (strain ATCC 15444), this protein is ATP-dependent protease subunit HslV.